A 695-amino-acid polypeptide reads, in one-letter code: Transketolase (695 aa).

His37 is a binding site for substrate. Thiamine diphosphate contacts are provided by residues His77 and 126–128 (GPL). Asp164 provides a ligand contact to Mg(2+). Thiamine diphosphate-binding residues include Gly165 and Asn194. 2 residues coordinate Mg(2+): Asn194 and Ile196. Positions 268, 361, and 388 each coordinate substrate. Residue His268 participates in thiamine diphosphate binding. Glu415 functions as the Proton donor in the catalytic mechanism. Phe441 contacts thiamine diphosphate. Residues His465, Asp473, and Arg524 each coordinate substrate.

This sequence belongs to the transketolase family. As to quaternary structure, homodimer. Mg(2+) is required as a cofactor. Ca(2+) serves as cofactor. The cofactor is Mn(2+). Requires Co(2+) as cofactor. It depends on thiamine diphosphate as a cofactor.

It carries out the reaction D-sedoheptulose 7-phosphate + D-glyceraldehyde 3-phosphate = aldehydo-D-ribose 5-phosphate + D-xylulose 5-phosphate. The protein operates within carbohydrate biosynthesis; Calvin cycle. Its function is as follows. Catalyzes the transfer of a two-carbon ketol group from a ketose donor to an aldose acceptor, via a covalent intermediate with the cofactor thiamine pyrophosphate. This is Transketolase (cbbT) from Sinorhizobium medicae (strain WSM419) (Ensifer medicae).